The following is a 485-amino-acid chain: MTTTLMIQGTTSDAGKTTLVAALCRILARKGIKVAPFKPQNMALNSAVTEDGGEIGRGQAVQAQAAGIAPHTDMNPILLKPSTDTGAQVIVHGKALSAMEADAYHDYKKVAMQAVLESYRRLQTQYQVIVVEGAGSPAEINLREGDIANMGFAEEVDCPVIIIADIDKGGVFAHLVGTLELLSASEQKRVVGFVINRFRGDIELLKPGLTWLEQKTNKPVLGVIPYIQKLHLEAEDALTANSTAENTQHLKIRVPVWQRISNHTDFDPLRLHPQVDFAFVGPGQSLEGADLIILPGTKNTIADLNFMRSQGWDTQLAKHLRYGGKVLGICGGLQMLGTALHDPHGIESPASSVNGLGYLDFETTFTQHKTLLNLQGELHINDKPVAISGYEIHAGLSTGPAFQRPIIYCEGQPEGCRSADDQIIATYWHGLFSQPSATQALLAWAGLTNARALDYSALIETELTRLADEVEQCMDIDALFPTFAS.

The 189-residue stretch at H249–A437 folds into the GATase cobBQ-type domain. Catalysis depends on C330, which acts as the Nucleophile. The active site involves H429.

This sequence belongs to the CobB/CobQ family. CobQ subfamily.

It participates in cofactor biosynthesis; adenosylcobalamin biosynthesis. Functionally, catalyzes amidations at positions B, D, E, and G on adenosylcobyrinic A,C-diamide. NH(2) groups are provided by glutamine, and one molecule of ATP is hydrogenolyzed for each amidation. In Saccharophagus degradans (strain 2-40 / ATCC 43961 / DSM 17024), this protein is Cobyric acid synthase.